A 706-amino-acid chain; its full sequence is MAHDNREPREVKNHLLFEVATEVAHRVGGIYSVLKSKAPVTTAEYGDRYTLIGPLNHQSAAVEVEELEPSNPELKATIQAMRDRGIGILYGRWLIEGAPRVLLFDTKTAYGYMNEWKTDLWNVASIPSPDNDEETNEAIVFGYLVAWFLGEFVCHEKRKAVIAHFHEWLAGVALPLTKKRQIDVTTIFTTHATLLGRYLCAGSVDFYNNLQWFDVDAEAGKRGIYHRYCIERAAAHSCDVFTTVSHITAYESEHLLKRKPDGVLPNGLNVTKFSAMHEFQNLHQQNKEKIHDFVRGHFYGHYDFEPENTLYFFTAGRYEFRNKGVDMFIESLARLNHRLKTAGSKTTVVAFIIMPAQTTSLTVEALKGQAVIKSLRDTVDVIERGIGRRIFERSVKWHEGDPLPEEKELITSQDRVLLRRRLFAMKRHTLPPIVTHNMLNDHEDPILNQIRRVQLFNHPSDRVKIVFHPEFLSSANPVLPLDYDDFVRGTHLGVFASYYEPWGYTPAECTVMGVPSITTNLSGFGCYMEELIENSSDYGIYIVDRRSKGVDDSVNQLTQYMFEFTQKSRRQRINQRNRTERLSDLLDWKRMGMEYVKARQLALRRAYPTSFNGEEEEDFIPGVEQKISRPFSVPGSPRDRTGMMTPGDFASLQESHEGLSTEDYVAWKLPEEEDPEEYPFPLTLKQRTGPGSPLDSIQGLQLNGTR.

Position 26 (Arg-26) interacts with UDP. The UDP-alpha-D-glucose site is built by His-191 and Arg-197. Alpha-D-glucose 6-phosphate contacts are provided by His-277, Glu-278, Gln-280, His-283, and Lys-287. Arg-317 serves as a coordination point for UDP. Position 317 (Arg-317) interacts with UDP-alpha-D-glucose. His-491 is a binding site for alpha-D-glucose 6-phosphate. Residues Glu-500, Trp-502, and Gly-503 each contribute to the UDP-alpha-D-glucose site. Thr-505 serves as a coordination point for UDP. 2 residues coordinate alpha-D-glucose 6-phosphate: Arg-572 and Arg-576. The tract at residues 670 to 706 (PEEEDPEEYPFPLTLKQRTGPGSPLDSIQGLQLNGTR) is disordered.

The protein belongs to the glycosyltransferase 3 family. Interacts with glucogenin gnn; the interaction is direct.

The enzyme catalyses [(1-&gt;4)-alpha-D-glucosyl](n) + UDP-alpha-D-glucose = [(1-&gt;4)-alpha-D-glucosyl](n+1) + UDP + H(+). It participates in glycan biosynthesis; glycogen biosynthesis. Allosteric activation by glucose-6-phosphate, and phosphorylation by a cAMP-dependent kinase. In terms of biological role, glycogen synthase participates in the glycogen biosynthetic process along with glycogenin and glycogen branching enzyme. Extends the primer composed of a few glucose units formed by glycogenin by adding new glucose units to it. In this context, glycogen synthase transfers the glycosyl residue from UDP-Glc to the non-reducing end of alpha-1,4-glucan. The chain is Glycogen [starch] synthase (gsy-1) from Neurospora crassa (strain ATCC 24698 / 74-OR23-1A / CBS 708.71 / DSM 1257 / FGSC 987).